The sequence spans 688 residues: Sciellin (688 aa).

Over residues 1-25 (MSNVTLRKMSPTGNEMKSTTQGTTR) the composition is skewed to polar residues. The segment at 1 to 29 (MSNVTLRKMSPTGNEMKSTTQGTTRKQQD) is disordered. K83 carries the N6-acetyllysine modification. Residues 134-231 (QPGGSLNANT…TNRSAERNIR (98 aa)) form a disordered region. Low complexity predominate over residues 140 to 154 (NANTSNTIASTSATT). Over residues 186–195 (VHPPIPPKPS) the composition is skewed to pro residues. 16 repeat units span residues 251 to 266 (GEEL…SLNR), 267 to 286 (NQGL…REKR), 287 to 306 (AKSL…DGKG), 307 to 326 (IQSL…NEKG), 327 to 346 (RQNL…TSRR), 347 to 366 (SEDL…NTTG), 367 to 386 (KKDL…NITR), 387 to 406 (GQSL…SNQG), 407 to 426 (SKDL…STEG), 427 to 446 (GQSL…TNQG), 447 to 465 (NQDL…KSSE), 466 to 484 (QGLD…NTDG), 485 to 504 (KQDL…NNQR), 505 to 523 (NQDL…RNNQ), 524 to 543 (SQDL…NTNR), and 544 to 563 (DQNL…NKNG). The segment at 251 to 563 (GEELDNLIKM…NSHVSENKNG (313 aa)) is 16 X approximate tandem repeats. At S289 the chain carries Phosphoserine. The interval 340–373 (MNKTSRRSEDLDNATEVNPKGHENTTGKKDLDGL) is disordered. The segment covering 358–373 (PKGHENTTGKKDLDGL) has biased composition (basic and acidic residues). A Phosphoserine modification is found at S389. In terms of domain architecture, LIM zinc-binding spans 619-685 (DMCTYCRKPL…EPCYSKIMAK (67 aa)).

Highly expressed in esophagus. It is also expressed in keratinocytes, amniotic tissue, foreskin stratum spinosum and stratum granulosum, hair follicle and nail.

It localises to the cytoplasm. It is found in the membrane. Functionally, may function in the assembly or regulation of proteins in the cornified envelope. The LIM domain may be involved in homotypic or heterotypic associations and may function to localize sciellin to the cornified envelope. This is Sciellin (SCEL) from Homo sapiens (Human).